The primary structure comprises 139 residues: Early placenta insulin-like peptide (139 aa).

A signal peptide spans 1 to 25 (MASLFRSYLPAIWLLLSQLLRESLA). Intrachain disulfides connect Cys-31–Cys-125, Cys-43–Cys-138, and Cys-124–Cys-129. Positions 59–114 (LESGRPKEMVSTSNNKDGQALGTTSEFIPNLSPELKKPLSEGQPSLKKIILSRKKR) are cleaved as a propeptide — c peptide.

Belongs to the insulin family. As to expression, expressed in placenta, uterus and in fetal perichondrium. Expression levels were increased in both early placentas and molar pregnancies and were reduced in choriocarcinoma cells.

It localises to the secreted. May play an important role in trophoblast development and in the regulation of bone formation. This chain is Early placenta insulin-like peptide (INSL4), found in Homo sapiens (Human).